The chain runs to 171 residues: Protein GrpE (171 aa).

Residues 1–20 (MNEEKEESPSTEAEGAGAEV) form a disordered region.

This sequence belongs to the GrpE family. Homodimer.

It localises to the cytoplasm. In terms of biological role, participates actively in the response to hyperosmotic and heat shock by preventing the aggregation of stress-denatured proteins, in association with DnaK and GrpE. It is the nucleotide exchange factor for DnaK and may function as a thermosensor. Unfolded proteins bind initially to DnaJ; upon interaction with the DnaJ-bound protein, DnaK hydrolyzes its bound ATP, resulting in the formation of a stable complex. GrpE releases ADP from DnaK; ATP binding to DnaK triggers the release of the substrate protein, thus completing the reaction cycle. Several rounds of ATP-dependent interactions between DnaJ, DnaK and GrpE are required for fully efficient folding. The protein is Protein GrpE of Acidithiobacillus ferrooxidans (strain ATCC 23270 / DSM 14882 / CIP 104768 / NCIMB 8455) (Ferrobacillus ferrooxidans (strain ATCC 23270)).